A 131-amino-acid chain; its full sequence is Small ribosomal subunit protein uS11 (131 aa).

Belongs to the universal ribosomal protein uS11 family. Part of the 30S ribosomal subunit. Interacts with proteins S7 and S18. Binds to IF-3.

Functionally, located on the platform of the 30S subunit, it bridges several disparate RNA helices of the 16S rRNA. Forms part of the Shine-Dalgarno cleft in the 70S ribosome. The sequence is that of Small ribosomal subunit protein uS11 from Thermotoga neapolitana (strain ATCC 49049 / DSM 4359 / NBRC 107923 / NS-E).